The following is a 356-amino-acid chain: UDP-N-acetylglucosamine--N-acetylmuramyl-(pentapeptide) pyrophosphoryl-undecaprenol N-acetylglucosamine transferase (356 aa).

UDP-N-acetyl-alpha-D-glucosamine-binding positions include 12 to 14 (TGG), N124, R163, S188, I242, 261 to 266 (ALTVSE), and Q287.

It belongs to the glycosyltransferase 28 family. MurG subfamily.

Its subcellular location is the cell inner membrane. It carries out the reaction di-trans,octa-cis-undecaprenyl diphospho-N-acetyl-alpha-D-muramoyl-L-alanyl-D-glutamyl-meso-2,6-diaminopimeloyl-D-alanyl-D-alanine + UDP-N-acetyl-alpha-D-glucosamine = di-trans,octa-cis-undecaprenyl diphospho-[N-acetyl-alpha-D-glucosaminyl-(1-&gt;4)]-N-acetyl-alpha-D-muramoyl-L-alanyl-D-glutamyl-meso-2,6-diaminopimeloyl-D-alanyl-D-alanine + UDP + H(+). It functions in the pathway cell wall biogenesis; peptidoglycan biosynthesis. In terms of biological role, cell wall formation. Catalyzes the transfer of a GlcNAc subunit on undecaprenyl-pyrophosphoryl-MurNAc-pentapeptide (lipid intermediate I) to form undecaprenyl-pyrophosphoryl-MurNAc-(pentapeptide)GlcNAc (lipid intermediate II). This Pseudomonas fluorescens (strain ATCC BAA-477 / NRRL B-23932 / Pf-5) protein is UDP-N-acetylglucosamine--N-acetylmuramyl-(pentapeptide) pyrophosphoryl-undecaprenol N-acetylglucosamine transferase.